The primary structure comprises 188 residues: Ribosome-recycling factor (188 aa).

Belongs to the RRF family.

The protein localises to the cytoplasm. Its function is as follows. Responsible for the release of ribosomes from messenger RNA at the termination of protein biosynthesis. May increase the efficiency of translation by recycling ribosomes from one round of translation to another. This chain is Ribosome-recycling factor, found in Granulibacter bethesdensis (strain ATCC BAA-1260 / CGDNIH1).